The chain runs to 353 residues: Melatonin receptor type 1A (353 aa).

A disordered region spans residues 1–26 (MRANGSELNGTVLPRDPPAEGSPRRP). The Extracellular segment spans residues 1 to 32 (MRANGSELNGTVLPRDPPAEGSPRRPPWVTST). Asn-4 and Asn-9 each carry an N-linked (GlcNAc...) asparagine glycan. A helical membrane pass occupies residues 33-53 (LATILIFTIVVDLLGNLLVIL). Topologically, residues 54-66 (SVYRNKKLRNAGN) are cytoplasmic. Residues 67-87 (IFVVSLAIADLVVAIYPYPLV) traverse the membrane as a helical segment. At 88–105 (LTSVFHNGWNLGYLHCQI) the chain is on the extracellular side. Residues Cys-103 and Cys-180 are joined by a disulfide bond. A helical transmembrane segment spans residues 106 to 126 (SGFLMGLSVIGSIFNITGIAI). The Cytoplasmic portion of the chain corresponds to 127–145 (NRYCYICHSLKYDKLYSDK). Residues 146–166 (NSLCYVGLIWVLTVVAIVPNL) form a helical membrane-spanning segment. Topologically, residues 167–190 (FVGSLQYDPRIYSCTFAQSVSSAY) are extracellular. A helical membrane pass occupies residues 191–211 (TIAVVFFHFILPIAIVTYCYL). Residues 212–243 (RIWILVIQVRRRVKPDNNPRLKPHDFRNFVTM) are Cytoplasmic-facing. The helical transmembrane segment at 244–264 (FVVFVLFAVCWAPLNFIGLAV) threads the bilayer. Residues 265-277 (AVDPETIIPRIPE) are Extracellular-facing. Residues 278 to 298 (WLFVSSYYMAYFNSCLNAIIY) traverse the membrane as a helical segment. Topologically, residues 299 to 353 (GLLNQNFRREYKKIVVSFCTAKAFFQDSSNDAADRIRSKPSPLITNNNQVKVDSV) are cytoplasmic.

The protein belongs to the G-protein coupled receptor 1 family. Expressed in optic tectum and retina, less in neostriatum, hypothalamus and thalamus.

It localises to the cell membrane. Functionally, high affinity receptor for melatonin. The activity of this receptor is mediated by pertussis toxin sensitive G proteins that inhibits adenylate cyclase activity. The sequence is that of Melatonin receptor type 1A from Gallus gallus (Chicken).